The chain runs to 295 residues: 4-hydroxy-tetrahydrodipicolinate synthase (295 aa).

Residue Thr48 coordinates pyruvate. The Proton donor/acceptor role is filled by Tyr135. The active-site Schiff-base intermediate with substrate is Lys163. Val204 contacts pyruvate.

This sequence belongs to the DapA family. In terms of assembly, homotetramer; dimer of dimers.

The protein localises to the cytoplasm. The enzyme catalyses L-aspartate 4-semialdehyde + pyruvate = (2S,4S)-4-hydroxy-2,3,4,5-tetrahydrodipicolinate + H2O + H(+). Its pathway is amino-acid biosynthesis; L-lysine biosynthesis via DAP pathway; (S)-tetrahydrodipicolinate from L-aspartate: step 3/4. Its function is as follows. Catalyzes the condensation of (S)-aspartate-beta-semialdehyde [(S)-ASA] and pyruvate to 4-hydroxy-tetrahydrodipicolinate (HTPA). This is 4-hydroxy-tetrahydrodipicolinate synthase from Francisella tularensis subsp. novicida (strain U112).